The following is a 692-amino-acid chain: Elongation factor G (692 aa).

Residues Ala8 to Leu282 form the tr-type G domain. Residues Ala17 to Thr24, Asp81 to His85, and Asn135 to Asp138 each bind GTP.

It belongs to the TRAFAC class translation factor GTPase superfamily. Classic translation factor GTPase family. EF-G/EF-2 subfamily.

The protein resides in the cytoplasm. Catalyzes the GTP-dependent ribosomal translocation step during translation elongation. During this step, the ribosome changes from the pre-translocational (PRE) to the post-translocational (POST) state as the newly formed A-site-bound peptidyl-tRNA and P-site-bound deacylated tRNA move to the P and E sites, respectively. Catalyzes the coordinated movement of the two tRNA molecules, the mRNA and conformational changes in the ribosome. This Streptococcus equi subsp. equi (strain 4047) protein is Elongation factor G.